The following is a 110-amino-acid chain: Nucleoid-associated protein SYO3AOP1_1366 (110 aa).

The protein belongs to the YbaB/EbfC family. In terms of assembly, homodimer.

It is found in the cytoplasm. The protein resides in the nucleoid. Binds to DNA and alters its conformation. May be involved in regulation of gene expression, nucleoid organization and DNA protection. The protein is Nucleoid-associated protein SYO3AOP1_1366 of Sulfurihydrogenibium sp. (strain YO3AOP1).